A 452-amino-acid chain; its full sequence is Zinc finger protein 672 (452 aa).

4 C2H2-type zinc fingers span residues 14–36 (YSCSECGKSFCYSSVLLRHERAH), 42–64 (FRCLECGERCARAADLRAHRRTH), 70–92 (YICSECGQSFRHSGRLDLHLGAH), and 99–122 (CPCRTCGRRFPHLPALLLHRRRQH). The C2H2-type 5; degenerate zinc-finger motif lies at 128-150 (RRCPLCARTFRQSALLFHQARAH). C2H2-type zinc fingers lie at residues 163 to 185 (HRCAQCPRAFRSGAGLRSHARIH), 199 to 221 (HQCGVCGKCFGKSSTLTRHLQTH), 227 to 249 (FKCPECGKGFLESATLVRHQRTH), 255 to 277 (YACGDCGRCFSESSTLLRHRRSH), 283 to 305 (HACATCGKGFGQRSDLVVHQRIH), 311 to 333 (FACPECGRRFSDRSDLTKHRRTH), 339 to 361 (YRCELCGKRFTCVSNLNVHRRNH), 367 to 389 (HKCPECSKAFSVASKLALHRKTH), and 395 to 417 (AECAECGKCFSHSRSLSQHQRAH).

Belongs to the krueppel C2H2-type zinc-finger protein family.

It is found in the nucleus. Functionally, may be involved in transcriptional regulation. The protein is Zinc finger protein 672 of Homo sapiens (Human).